We begin with the raw amino-acid sequence, 402 residues long: N-acetyltransferase Eis (402 aa).

The N-acetyltransferase domain occupies 3–154 (VTLCSPTEDD…RFARFHADAP (152 aa)). Acetyl-CoA-binding positions include 85 to 87 (VAV), 93 to 98 (RRGLLR), and 121 to 122 (SE). The Proton donor role is filled by Tyr126. Catalysis depends on Phe402, which acts as the Proton acceptor; via carboxylate.

This sequence belongs to the acetyltransferase Eis family. As to quaternary structure, homohexamer; trimer of dimers.

It localises to the secreted. The protein resides in the host cytoplasmic vesicle. It is found in the host phagosome. The protein localises to the extracellular vesicle. Its subcellular location is the bacterial extracellular vesicle. It localises to the host extracellular space. It carries out the reaction L-lysyl-[protein] + acetyl-CoA = N(6)-acetyl-L-lysyl-[protein] + CoA + H(+). Effector that is released into the host cell and affects host immune responses. Acts as an acetyltransferase that acetylates lysine residues of host proteins. In Mycobacterium bovis (strain BCG / Pasteur 1173P2), this protein is N-acetyltransferase Eis.